Here is a 352-residue protein sequence, read N- to C-terminus: tRNA uridine(34) hydroxylase (352 aa).

The 95-residue stretch at 144 to 238 folds into the Rhodanese domain; it reads SDPDVILIDT…YLEEVPASDS (95 aa). Catalysis depends on cysteine 198, which acts as the Cysteine persulfide intermediate.

This sequence belongs to the TrhO family.

It catalyses the reaction uridine(34) in tRNA + AH2 + O2 = 5-hydroxyuridine(34) in tRNA + A + H2O. Its function is as follows. Catalyzes oxygen-dependent 5-hydroxyuridine (ho5U) modification at position 34 in tRNAs. The chain is tRNA uridine(34) hydroxylase from Psychrobacter arcticus (strain DSM 17307 / VKM B-2377 / 273-4).